Here is a 61-residue protein sequence, read N- to C-terminus: Large ribosomal subunit protein uL30 (61 aa).

It belongs to the universal ribosomal protein uL30 family. As to quaternary structure, part of the 50S ribosomal subunit.

The sequence is that of Large ribosomal subunit protein uL30 from Frankia casuarinae (strain DSM 45818 / CECT 9043 / HFP020203 / CcI3).